The sequence spans 292 residues: 5,10-methylenetetrahydrofolate reductase (292 aa).

E26 serves as the catalytic Proton donor/acceptor. T57 contacts NADH. Positions 58, 60, 86, 116, 117, 118, 130, 150, 154, 157, 163, 166, 169, and 170 each coordinate FAD. A (6S)-5-methyl-5,6,7,8-tetrahydrofolate-binding site is contributed by D118. Residue Q181 coordinates NADH. Residues Q181, Q217, and R277 each coordinate (6S)-5-methyl-5,6,7,8-tetrahydrofolate.

Belongs to the methylenetetrahydrofolate reductase family. FAD serves as cofactor.

It catalyses the reaction (6S)-5-methyl-5,6,7,8-tetrahydrofolate + NAD(+) = (6R)-5,10-methylene-5,6,7,8-tetrahydrofolate + NADH + H(+). It participates in one-carbon metabolism; tetrahydrofolate interconversion. The protein operates within amino-acid biosynthesis; L-methionine biosynthesis via de novo pathway. Catalyzes the NADH-dependent reduction of 5,10-methylenetetrahydrofolate to 5-methyltetrahydrofolate. Is required to provide the methyl group necessary for methionine synthetase to convert homocysteine to methionine; the methyl group is given by 5-methyltetrahydrofolate. The chain is 5,10-methylenetetrahydrofolate reductase (metF) from Neisseria meningitidis serogroup B (strain ATCC BAA-335 / MC58).